Here is a 253-residue protein sequence, read N- to C-terminus: Imidazole glycerol phosphate synthase subunit HisF (253 aa).

Active-site residues include Asp-11 and Asp-130.

This sequence belongs to the HisA/HisF family. Heterodimer of HisH and HisF.

It is found in the cytoplasm. It catalyses the reaction 5-[(5-phospho-1-deoxy-D-ribulos-1-ylimino)methylamino]-1-(5-phospho-beta-D-ribosyl)imidazole-4-carboxamide + L-glutamine = D-erythro-1-(imidazol-4-yl)glycerol 3-phosphate + 5-amino-1-(5-phospho-beta-D-ribosyl)imidazole-4-carboxamide + L-glutamate + H(+). It functions in the pathway amino-acid biosynthesis; L-histidine biosynthesis; L-histidine from 5-phospho-alpha-D-ribose 1-diphosphate: step 5/9. In terms of biological role, IGPS catalyzes the conversion of PRFAR and glutamine to IGP, AICAR and glutamate. The HisF subunit catalyzes the cyclization activity that produces IGP and AICAR from PRFAR using the ammonia provided by the HisH subunit. This Dinoroseobacter shibae (strain DSM 16493 / NCIMB 14021 / DFL 12) protein is Imidazole glycerol phosphate synthase subunit HisF.